Reading from the N-terminus, the 341-residue chain is MQKSYSLQELATQIGATVRGNTDVVVENIAPLDKAQSNQLTFISNVKFRVLLKDSKAGILIVSEEDVEHCSPESNLLIVKDPYVAYAILAQYMDSTPKAAQGIAKSAVIFDGVLLGENVSIGANAVIEEGVVLGDNVIIGANCFVGKNTKIGSGTQLWANVTVYHNVEIGANCLIQSGTVIGSDGFGYANDRGRWIKIPQVGQVIIGNNVEIGANTCIDRGALDATIIEDNVIIDNLCQIAHNVHIGTGTAVAGGVIMAGSLTVGRYCLIGGASVINGHMEICDKVTITGMGMVMRPITEPGVYSSGIPLQTNKEWRKTAALTLGIDGINKRLKALEKKIS.

His-242 serves as the catalytic Proton acceptor.

Belongs to the transferase hexapeptide repeat family. LpxD subfamily. In terms of assembly, homotrimer.

The enzyme catalyses a UDP-3-O-[(3R)-3-hydroxyacyl]-alpha-D-glucosamine + a (3R)-hydroxyacyl-[ACP] = a UDP-2-N,3-O-bis[(3R)-3-hydroxyacyl]-alpha-D-glucosamine + holo-[ACP] + H(+). It functions in the pathway bacterial outer membrane biogenesis; LPS lipid A biosynthesis. Catalyzes the N-acylation of UDP-3-O-acylglucosamine using 3-hydroxyacyl-ACP as the acyl donor. Is involved in the biosynthesis of lipid A, a phosphorylated glycolipid that anchors the lipopolysaccharide to the outer membrane of the cell. This chain is UDP-3-O-acylglucosamine N-acyltransferase, found in Haemophilus influenzae (strain ATCC 51907 / DSM 11121 / KW20 / Rd).